Reading from the N-terminus, the 367-residue chain is UDP-N-acetylglucosamine--N-acetylmuramyl-(pentapeptide) pyrophosphoryl-undecaprenol N-acetylglucosamine transferase (367 aa).

Residues 13-15, Arg-168, Ser-196, Ile-252, and Gln-297 contribute to the UDP-N-acetyl-alpha-D-glucosamine site; that span reads TGG.

This sequence belongs to the glycosyltransferase 28 family. MurG subfamily.

The protein localises to the cell inner membrane. It carries out the reaction di-trans,octa-cis-undecaprenyl diphospho-N-acetyl-alpha-D-muramoyl-L-alanyl-D-glutamyl-meso-2,6-diaminopimeloyl-D-alanyl-D-alanine + UDP-N-acetyl-alpha-D-glucosamine = di-trans,octa-cis-undecaprenyl diphospho-[N-acetyl-alpha-D-glucosaminyl-(1-&gt;4)]-N-acetyl-alpha-D-muramoyl-L-alanyl-D-glutamyl-meso-2,6-diaminopimeloyl-D-alanyl-D-alanine + UDP + H(+). Its pathway is cell wall biogenesis; peptidoglycan biosynthesis. Functionally, cell wall formation. Catalyzes the transfer of a GlcNAc subunit on undecaprenyl-pyrophosphoryl-MurNAc-pentapeptide (lipid intermediate I) to form undecaprenyl-pyrophosphoryl-MurNAc-(pentapeptide)GlcNAc (lipid intermediate II). The polypeptide is UDP-N-acetylglucosamine--N-acetylmuramyl-(pentapeptide) pyrophosphoryl-undecaprenol N-acetylglucosamine transferase (Methylibium petroleiphilum (strain ATCC BAA-1232 / LMG 22953 / PM1)).